We begin with the raw amino-acid sequence, 284 residues long: Bifunctional protein FolD (284 aa).

NADP(+) contacts are provided by residues 166–168 and isoleucine 232; that span reads GAS.

It belongs to the tetrahydrofolate dehydrogenase/cyclohydrolase family. As to quaternary structure, homodimer.

The catalysed reaction is (6R)-5,10-methylene-5,6,7,8-tetrahydrofolate + NADP(+) = (6R)-5,10-methenyltetrahydrofolate + NADPH. It carries out the reaction (6R)-5,10-methenyltetrahydrofolate + H2O = (6R)-10-formyltetrahydrofolate + H(+). Its pathway is one-carbon metabolism; tetrahydrofolate interconversion. In terms of biological role, catalyzes the oxidation of 5,10-methylenetetrahydrofolate to 5,10-methenyltetrahydrofolate and then the hydrolysis of 5,10-methenyltetrahydrofolate to 10-formyltetrahydrofolate. The chain is Bifunctional protein FolD from Glaesserella parasuis serovar 5 (strain SH0165) (Haemophilus parasuis).